The sequence spans 448 residues: Protein giant (448 aa).

Disordered regions lie at residues methionine 23 to glutamine 47, glutamine 83 to threonine 134, valine 238 to lysine 259, and isoleucine 298 to serine 363. Residues histidine 30–glutamine 47 are compositionally biased toward low complexity. Positions aspartate 100–arginine 112 are enriched in basic and acidic residues. Positions proline 115–threonine 134 are enriched in low complexity. The segment covering isoleucine 298–asparagine 310 has biased composition (polar residues). A compositionally biased stretch (low complexity) spans serine 318–serine 333. The bZIP domain maps to aspartate 384–threonine 447. The basic motif stretch occupies residues arginine 390 to arginine 406. The interval isoleucine 407 to isoleucine 414 is leucine-zipper.

This sequence belongs to the bZIP family. In terms of assembly, homodimer or heterodimer. Post-translationally, phosphorylated at multiple sites.

It localises to the nucleus. In terms of biological role, represses the expression of both the krueppel and knirps segmentation gap genes. Binds, in vitro, to the krueppel regulatory elements CD1 and CD2. It is required in the early embryo for the development of portions of the head and abdomen. This is Protein giant (gt) from Drosophila melanogaster (Fruit fly).